Here is a 453-residue protein sequence, read N- to C-terminus: tRNA modification GTPase MnmE (453 aa).

(6S)-5-formyl-5,6,7,8-tetrahydrofolate is bound by residues R22, E79, and K119. Residues 215 to 376 (GMKVVIAGRP…LKQHLKSLMG (162 aa)) enclose the TrmE-type G domain. Residue N225 participates in K(+) binding. Residues 225–230 (NAGKSS), 244–250 (TEIAGTT), 269–272 (DTAG), and 334–337 (NKAD) each bind GTP. S229 contributes to the Mg(2+) binding site. 3 residues coordinate K(+): T244, I246, and T249. Residue T250 participates in Mg(2+) binding. K453 serves as a coordination point for (6S)-5-formyl-5,6,7,8-tetrahydrofolate.

The protein belongs to the TRAFAC class TrmE-Era-EngA-EngB-Septin-like GTPase superfamily. TrmE GTPase family. As to quaternary structure, homodimer. Heterotetramer of two MnmE and two MnmG subunits. It depends on K(+) as a cofactor.

Its subcellular location is the cytoplasm. Functionally, exhibits a very high intrinsic GTPase hydrolysis rate. Involved in the addition of a carboxymethylaminomethyl (cmnm) group at the wobble position (U34) of certain tRNAs, forming tRNA-cmnm(5)s(2)U34. This chain is tRNA modification GTPase MnmE, found in Shewanella frigidimarina (strain NCIMB 400).